The chain runs to 412 residues: Argininosuccinate synthase (412 aa).

ATP is bound by residues 10–18 (AYSGGLDTS) and Ala36. The L-citrulline site is built by Tyr87 and Ser92. Residue 115-123 (SHGATGKGN) coordinates ATP. Residues Thr119, Asn123, and Asp124 each coordinate L-aspartate. Asn123 contacts L-citrulline. Arg127, Ser180, Ser189, Glu270, and Tyr282 together coordinate L-citrulline.

This sequence belongs to the argininosuccinate synthase family. Homotetramer.

The catalysed reaction is L-citrulline + L-aspartate + ATP = 2-(N(omega)-L-arginino)succinate + AMP + diphosphate + H(+). Its pathway is amino-acid biosynthesis; L-arginine biosynthesis; L-arginine from L-ornithine and carbamoyl phosphate: step 2/3. It functions in the pathway nitrogen metabolism; urea cycle; (N(omega)-L-arginino)succinate from L-aspartate and L-citrulline: step 1/1. This is Argininosuccinate synthase from Aedes aegypti (Yellowfever mosquito).